Reading from the N-terminus, the 220-residue chain is Small ribosomal subunit protein eS8 (220 aa).

This sequence belongs to the eukaryotic ribosomal protein eS8 family.

The chain is Small ribosomal subunit protein eS8 (RPS8A) from Leishmania major.